A 428-amino-acid chain; its full sequence is Tol-Pal system protein TolB (428 aa).

Positions 1-23 (MRRLYQTVCTLALLLVGLQAAHA) are cleaved as a signal peptide.

It belongs to the TolB family. As to quaternary structure, the Tol-Pal system is composed of five core proteins: the inner membrane proteins TolA, TolQ and TolR, the periplasmic protein TolB and the outer membrane protein Pal. They form a network linking the inner and outer membranes and the peptidoglycan layer.

It localises to the periplasm. Functionally, part of the Tol-Pal system, which plays a role in outer membrane invagination during cell division and is important for maintaining outer membrane integrity. The protein is Tol-Pal system protein TolB of Alkalilimnicola ehrlichii (strain ATCC BAA-1101 / DSM 17681 / MLHE-1).